The primary structure comprises 314 residues: tRNA-cytidine(32) 2-sulfurtransferase (314 aa).

The short motif at 49 to 54 (SGGKDS) is the PP-loop motif element. [4Fe-4S] cluster-binding residues include Cys-124, Cys-127, and Cys-215.

It belongs to the TtcA family. In terms of assembly, homodimer. It depends on Mg(2+) as a cofactor. [4Fe-4S] cluster serves as cofactor.

It is found in the cytoplasm. The enzyme catalyses cytidine(32) in tRNA + S-sulfanyl-L-cysteinyl-[cysteine desulfurase] + AH2 + ATP = 2-thiocytidine(32) in tRNA + L-cysteinyl-[cysteine desulfurase] + A + AMP + diphosphate + H(+). It functions in the pathway tRNA modification. Functionally, catalyzes the ATP-dependent 2-thiolation of cytidine in position 32 of tRNA, to form 2-thiocytidine (s(2)C32). The sulfur atoms are provided by the cysteine/cysteine desulfurase (IscS) system. This Histophilus somni (strain 129Pt) (Haemophilus somnus) protein is tRNA-cytidine(32) 2-sulfurtransferase.